Consider the following 108-residue polypeptide: Heme-degrading monooxygenase HmoA (108 aa).

In terms of domain architecture, ABM spans 2-95 (FVQLRKMTVK…DYLISTEVSM (94 aa)). His-76 contacts heme.

Belongs to the antibiotic biosynthesis monooxygenase family. Homodimer.

The protein resides in the cytoplasm. It catalyses the reaction heme b + 3 reduced [NADPH--hemoprotein reductase] + 3 O2 = biliverdin IXalpha + CO + Fe(2+) + 3 oxidized [NADPH--hemoprotein reductase] + 3 H2O + H(+). In terms of biological role, allows bacterial pathogens to use the host heme as an iron source. Catalyzes the oxidative degradation of the heme macrocyclic porphyrin ring in the presence of a suitable electron donor such as ascorbate or NADPH--cytochrome P450 reductase, with subsequent release of free iron. This chain is Heme-degrading monooxygenase HmoA (hmoA), found in Bacillus subtilis (strain 168).